Consider the following 663-residue polypeptide: Translation factor GUF1, mitochondrial (663 aa).

A mitochondrion-targeting transit peptide spans 1 to 37 (MRGCLQSVRLLTTALGQSPRRPLPFAFRLPPNASRLF). The region spanning 65 to 245 (ERYRNFCIVA…TIVEQIPAPI (181 aa)) is the tr-type G domain. GTP-binding positions include 74–81 (AHVDHGKS), 138–142 (DTPGH), and 192–195 (NKVD).

This sequence belongs to the TRAFAC class translation factor GTPase superfamily. Classic translation factor GTPase family. LepA subfamily.

It is found in the mitochondrion inner membrane. The enzyme catalyses GTP + H2O = GDP + phosphate + H(+). Its function is as follows. Promotes mitochondrial protein synthesis. May act as a fidelity factor of the translation reaction, by catalyzing a one-codon backward translocation of tRNAs on improperly translocated ribosomes. Binds to mitochondrial ribosomes in a GTP-dependent manner. In Uncinocarpus reesii (strain UAMH 1704), this protein is Translation factor GUF1, mitochondrial.